We begin with the raw amino-acid sequence, 700 residues long: Polyribonucleotide nucleotidyltransferase (700 aa).

Mg(2+) is bound by residues Asp-485 and Asp-491. Residues 552 to 611 (PRITTLKINPEKIRDVIGKGGATIRALTEETGTTIELEDDGTVKIASANGDATKEAIRRI) enclose the KH domain. Residues 621 to 689 (GTVYNGKVVR…RQGRVRLSMK (69 aa)) form the S1 motif domain.

This sequence belongs to the polyribonucleotide nucleotidyltransferase family. In terms of assembly, component of the RNA degradosome, which is a multiprotein complex involved in RNA processing and mRNA degradation. Mg(2+) is required as a cofactor.

It localises to the cytoplasm. The enzyme catalyses RNA(n+1) + phosphate = RNA(n) + a ribonucleoside 5'-diphosphate. Its function is as follows. Involved in mRNA degradation. Catalyzes the phosphorolysis of single-stranded polyribonucleotides processively in the 3'- to 5'-direction. In Shewanella loihica (strain ATCC BAA-1088 / PV-4), this protein is Polyribonucleotide nucleotidyltransferase.